A 100-amino-acid polypeptide reads, in one-letter code: Small ribosomal subunit protein uS14c (100 aa).

This sequence belongs to the universal ribosomal protein uS14 family. Part of the 30S ribosomal subunit.

It localises to the plastid. Functionally, binds 16S rRNA, required for the assembly of 30S particles. This Cuscuta gronovii (Common dodder) protein is Small ribosomal subunit protein uS14c (rps14).